The following is a 93-amino-acid chain: Small ribosomal subunit protein uS19 (93 aa).

The disordered stretch occupies residues 73 to 93 (EFSPTRTFRGHVKDDRKSKRR). A compositionally biased stretch (basic and acidic residues) spans 83-93 (HVKDDRKSKRR).

This sequence belongs to the universal ribosomal protein uS19 family.

Its function is as follows. Protein S19 forms a complex with S13 that binds strongly to the 16S ribosomal RNA. The protein is Small ribosomal subunit protein uS19 of Streptomyces avermitilis (strain ATCC 31267 / DSM 46492 / JCM 5070 / NBRC 14893 / NCIMB 12804 / NRRL 8165 / MA-4680).